The primary structure comprises 586 residues: CTP synthase (586 aa).

The tract at residues 1–278 (MRKHPQTATK…DAFVVRRLNL (278 aa)) is amidoligase domain. Ser-20 serves as a coordination point for CTP. UTP is bound at residue Ser-20. Residues 21–26 (SLGKGL) and Asp-78 contribute to the ATP site. Asp-78 and Glu-152 together coordinate Mg(2+). Residues 159–161 (DIE), 199–204 (KTKPTQ), and Lys-235 each bind CTP. Residues 199–204 (KTKPTQ) and Lys-235 each bind UTP. One can recognise a Glutamine amidotransferase type-1 domain in the interval 303–551 (RIALVGKYVE…VGAAIDYKAG (249 aa)). Gly-366 is a binding site for L-glutamine. The Nucleophile; for glutamine hydrolysis role is filled by Cys-393. Residues 394-397 (LGLQ), Glu-416, and Arg-477 each bind L-glutamine. Residues His-524 and Glu-526 contribute to the active site. A disordered region spans residues 560–586 (EIPEHTPNGSSHRDGVGQPLPEPASRG).

It belongs to the CTP synthase family. In terms of assembly, homotetramer.

It catalyses the reaction UTP + L-glutamine + ATP + H2O = CTP + L-glutamate + ADP + phosphate + 2 H(+). It carries out the reaction L-glutamine + H2O = L-glutamate + NH4(+). The catalysed reaction is UTP + NH4(+) + ATP = CTP + ADP + phosphate + 2 H(+). Its pathway is pyrimidine metabolism; CTP biosynthesis via de novo pathway; CTP from UDP: step 2/2. Its activity is regulated as follows. Allosterically activated by GTP, when glutamine is the substrate; GTP has no effect on the reaction when ammonia is the substrate. The allosteric effector GTP functions by stabilizing the protein conformation that binds the tetrahedral intermediate(s) formed during glutamine hydrolysis. Inhibited by the product CTP, via allosteric rather than competitive inhibition. Catalyzes the ATP-dependent amination of UTP to CTP with either L-glutamine or ammonia as the source of nitrogen. Regulates intracellular CTP levels through interactions with the four ribonucleotide triphosphates. This chain is CTP synthase, found in Mycobacterium tuberculosis (strain ATCC 25177 / H37Ra).